The following is a 155-amino-acid chain: Ribonuclease HI (155 aa).

The 142-residue stretch at 1 to 142 folds into the RNase H type-1 domain; the sequence is MTKQVEIFTD…CDELARAAAE (142 aa). Residues Asp10, Glu48, Asp70, and Asp134 each coordinate Mg(2+).

This sequence belongs to the RNase H family. As to quaternary structure, monomer. It depends on Mg(2+) as a cofactor.

The protein resides in the cytoplasm. It carries out the reaction Endonucleolytic cleavage to 5'-phosphomonoester.. In terms of biological role, endonuclease that specifically degrades the RNA of RNA-DNA hybrids. The protein is Ribonuclease HI of Vibrio vulnificus (strain CMCP6).